We begin with the raw amino-acid sequence, 155 residues long: Ribosomal RNA large subunit methyltransferase H (155 aa).

S-adenosyl-L-methionine is bound by residues leucine 72, glycine 103, and 122–127 (LSPLTL).

Belongs to the RNA methyltransferase RlmH family. In terms of assembly, homodimer.

The protein resides in the cytoplasm. The catalysed reaction is pseudouridine(1915) in 23S rRNA + S-adenosyl-L-methionine = N(3)-methylpseudouridine(1915) in 23S rRNA + S-adenosyl-L-homocysteine + H(+). In terms of biological role, specifically methylates the pseudouridine at position 1915 (m3Psi1915) in 23S rRNA. The chain is Ribosomal RNA large subunit methyltransferase H from Aeromonas salmonicida (strain A449).